The following is a 1788-amino-acid chain: U3 small nucleolar RNA-associated protein 10 (1788 aa).

The stretch at 585–622 (LDFQAVVPYAIVALSDPAKKVRRAAAELVTVLGSFYET) is one HEAT 1 repeat. Positions 884-905 (PATKRRRVGSSEKSVDSQSPAD) are disordered. HEAT repeat units follow at residues 926 to 962 (AKHP…LVLS), 1049 to 1086 (QTVK…AYEH), 1257 to 1294 (LSIA…SESI), 1301 to 1339 (EALL…KYGK), 1703 to 1740 (EHHK…RLGE), and 1744 to 1781 (QSLP…TLGE).

This sequence belongs to the HEATR1/UTP10 family. In terms of assembly, component of the ribosomal small subunit (SSU) processome.

Its subcellular location is the nucleus. The protein resides in the nucleolus. Functionally, involved in nucleolar processing of pre-18S ribosomal RNA. Involved in ribosome biosynthesis. The polypeptide is U3 small nucleolar RNA-associated protein 10 (rbg-5) (Neurospora crassa (strain ATCC 24698 / 74-OR23-1A / CBS 708.71 / DSM 1257 / FGSC 987)).